The primary structure comprises 160 residues: Transcriptional repressor NrdR (160 aa).

Residues Cys3 to Cys34 fold into a zinc finger. An ATP-cone domain is found at Leu49–Asp139.

This sequence belongs to the NrdR family. Zn(2+) serves as cofactor.

Negatively regulates transcription of bacterial ribonucleotide reductase nrd genes and operons by binding to NrdR-boxes. This Bartonella quintana (strain Toulouse) (Rochalimaea quintana) protein is Transcriptional repressor NrdR.